The primary structure comprises 251 residues: Small ribosomal subunit protein uS2 (251 aa).

This sequence belongs to the universal ribosomal protein uS2 family.

The chain is Small ribosomal subunit protein uS2 from Azoarcus sp. (strain BH72).